The sequence spans 383 residues: MAEPRQEFDVMEDHAGTYGLGDRKDQEGYTMLQDQEGDTDAGLKAEEAGIGDTPSLEDEAAGHVTQARMVSKSKDGTGSDDKKAKGADGKTKIATPRGAAPPGQKGQANATRIPAKTPPAPKTPPSSGEPPKSGDRSGYSSPGSPGTPGSRSRTPSLPTPPAREPKKVAVVRTPPKSPSSAKSRLQTAPVPMPDLKNVKSKIGSTENLKHQPGGGKVQIINKKLDLSNVQSKCGSKDNIKHVPGGGSVQIVYKPVDLSKVTSKCGSLGNIHHKPGGGQVEVKSEKLDFKDRVQSKIGSLDNITHVPGGGNKKIETHKLTFRENAKAKTDHGAEIVYKSPVVSGDTSPRHLSNVSSTGSIDMVDSPQLATLADEVSASLAKQGL.

A compositionally biased stretch (basic and acidic residues) spans 1-27; the sequence is MAEPRQEFDVMEDHAGTYGLGDRKDQE. Residues 1–198 are disordered; it reads MAEPRQEFDV…PVPMPDLKNV (198 aa). Position 2 is an N-acetylalanine (alanine 2). Phosphotyrosine occurs at positions 18 and 29. Lysine 44 is covalently cross-linked (Glycyl lysine isopeptide (Lys-Gly) (interchain with G-Cter in ubiquitin)). Position 53 is a phosphothreonine (threonine 53). Residues 72 to 91 are compositionally biased toward basic and acidic residues; that stretch reads KSKDGTGSDDKKAKGADGKT. A Phosphothreonine modification is found at threonine 95. An Omega-N-methylarginine modification is found at arginine 97. An N6,N6-dimethyllysine; alternate modification is found at lysine 105. Lysine 105 is modified (N6-acetyllysine; alternate). 3 positions are modified to phosphothreonine: threonine 111, threonine 117, and threonine 123. Pro residues predominate over residues 116-128; the sequence is KTPPAPKTPPSSG. Serine 127, serine 133, and serine 137 each carry phosphoserine. Positions 129 to 156 are enriched in low complexity; the sequence is EPPKSGDRSGYSSPGSPGTPGSRSRTPS. Position 139 is a phosphotyrosine (tyrosine 139). Phosphoserine is present on residues serine 140, serine 141, and serine 144. Residues threonine 147 and threonine 154 each carry the phosphothreonine modification. Residue serine 156 is modified to Phosphoserine. Threonine 159 carries the post-translational modification Phosphothreonine. Lysine 167 is subject to N6-acetyllysine. The residue at position 173 (threonine 173) is a Phosphothreonine. Phosphoserine occurs at positions 177 and 179. Tau/MAP repeat units follow at residues 186–216, 217–247, 248–278, and 279–310; these read QTAP…GGGK, VQII…GGGS, VQIV…GGGQ, and VEVK…GGGN. Lysine 196 participates in a covalent cross-link: Glycyl lysine isopeptide (Lys-Gly) (interchain with G-Cter in ubiquitin). Lysine 201 is subject to N6-acetyllysine; alternate. The residue at position 201 (lysine 201) is an N6-methyllysine; alternate. Lysine 201 participates in a covalent cross-link: Glycyl lysine isopeptide (Lys-Gly) (interchain with G-Cter in ubiquitin); alternate. The residue at position 204 (serine 204) is a Phosphoserine. A Glycyl lysine isopeptide (Lys-Gly) (interchain with G-Cter in ubiquitin) cross-link involves residue lysine 209. N6-acetyllysine; alternate is present on lysine 223. A Glycyl lysine isopeptide (Lys-Gly) (interchain with G-Cter in ubiquitin); alternate cross-link involves residue lysine 223. Residues serine 227 and serine 231 each carry the phosphoserine modification. Lysine 232 carries the post-translational modification N6-acetyllysine. An intrachain disulfide couples cysteine 233 to cysteine 264. Serine 235 carries the post-translational modification Phosphoserine. An N6-acetyllysine; alternate modification is found at lysine 240. A Glycyl lysine isopeptide (Lys-Gly) (interchain with G-Cter in ubiquitin); alternate cross-link involves residue lysine 240. Serine 247 carries the post-translational modification Phosphoserine. An N6,N6-dimethyllysine; alternate modification is found at lysine 253. Lysine 253, lysine 259, and lysine 263 each carry N6-acetyllysine; alternate. Glycyl lysine isopeptide (Lys-Gly) (interchain with G-Cter in ubiquitin); alternate cross-links involve residues lysine 253, lysine 259, and lysine 263. Serine 266 carries the post-translational modification Phosphoserine. 3 positions are modified to N6-acetyllysine; alternate: lysine 273, lysine 285, and lysine 289. Glycyl lysine isopeptide (Lys-Gly) (interchain with G-Cter in ubiquitin); alternate cross-links involve residues lysine 273, lysine 285, and lysine 289. The residue at position 291 (arginine 291) is an Omega-N-methylarginine. Position 294 is a phosphoserine (serine 294). Lysine 295 is covalently cross-linked (Glycyl lysine isopeptide (Lys-Gly) (interchain with G-Cter in ubiquitin)). Serine 298 bears the Phosphoserine mark. An N6-acetyllysine; alternate modification is found at lysine 311. Residue lysine 311 forms a Glycyl lysine isopeptide (Lys-Gly) (interchain with G-Cter in ubiquitin); alternate linkage. Residue lysine 317 forms a Glycyl lysine isopeptide (Lys-Gly) (interchain with G-Cter in ubiquitin) linkage. N6-acetyllysine; alternate is present on lysine 327. Residue lysine 327 forms a Glycyl lysine isopeptide (Lys-Gly) (interchain with G-Cter in ubiquitin); alternate linkage. Tyrosine 336 is subject to Phosphotyrosine. A phosphoserine mark is found at serine 338 and serine 342. Residues 340–359 form a disordered region; sequence VVSGDTSPRHLSNVSSTGSI. Polar residues predominate over residues 343–358; that stretch reads GDTSPRHLSNVSSTGS. At threonine 345 the chain carries Phosphothreonine. Phosphoserine is present on residues serine 346, serine 351, serine 358, and serine 364. The residue at position 369 (threonine 369) is a Phosphothreonine.

As to quaternary structure, interacts with MARK1, MARK2, MARK3 and MARK4. Interacts with SQSTM1 when polyubiquitinated. Interacts with PSMC2 through SQSTM1. Interacts with FKBP4. Binds to CSNK1D. Interacts with SGK1. Interacts with PIN1. Interacts with LRRK2. Interacts with LRP1, leading to endocytosis; this interaction is reduced in the presence of LRPAP1/RAP. Post-translationally, polyubiquitinated. Requires functional TRAF6 and may provoke SQSTM1-dependent degradation by the proteasome. In terms of processing, phosphorylation at various serine and threonine residues in S-P or T-P motifs by proline-directed protein kinases (PDPK1, CDK1, CDK5, GSK3, MAPK) (a few sites per protein in interphase, more in mitosis), and at serine residues in K-X-G-S motifs by MAP/microtubule affinity-regulating kinase (MARK1, MARK2, MARK3 or MARK4), causing detachment from microtubules, and their disassembly. Phosphorylation at Ser-204 by BRSK1 and BRSK2 in neurons affects ability to bind microtubules and plays a role in neuron polarization. Phosphorylated by PHK. Dephosphorylation at several serine and threonine residues by the serine/threonine phosphatase PPP5C. As to expression, expressed in neurons.

It localises to the cytoplasm. Its subcellular location is the cytosol. The protein localises to the cell membrane. The protein resides in the cytoskeleton. It is found in the cell projection. It localises to the axon. Its subcellular location is the dendrite. Functionally, promotes microtubule assembly and stability, and might be involved in the establishment and maintenance of neuronal polarity. The C-terminus binds axonal microtubules while the N-terminus binds neural plasma membrane components, suggesting that tau functions as a linker protein between both. Axonal polarity is predetermined by tau localization (in the neuronal cell) in the domain of the cell body defined by the centrosome. The polypeptide is Microtubule-associated protein tau (MAPT) (Papio hamadryas (Hamadryas baboon)).